The chain runs to 428 residues: Pyruvate dehydrogenase E1 component subunit alpha-3, chloroplastic (428 aa).

A chloroplast-targeting transit peptide spans 1–61 (MATAFAPTKL…NATRRSPVVS (61 aa)). Residues His115, Tyr141, Arg142, Ala190, Ile192, Asp227, Gly228, and Asn256 each coordinate pyruvate. Thiamine diphosphate-binding residues include Tyr141, Arg142, Ala190, Ile192, Asp227, Gly228, Asn256, and His325. Asp227 lines the Mg(2+) pocket. Asn256 is a Mg(2+) binding site.

In terms of assembly, tetramer of 2 alpha and 2 beta subunits. Thiamine diphosphate is required as a cofactor. The cofactor is Mg(2+).

The protein resides in the plastid. Its subcellular location is the chloroplast. It catalyses the reaction N(6)-[(R)-lipoyl]-L-lysyl-[protein] + pyruvate + H(+) = N(6)-[(R)-S(8)-acetyldihydrolipoyl]-L-lysyl-[protein] + CO2. The pyruvate dehydrogenase complex catalyzes the overall conversion of pyruvate to acetyl-CoA and CO(2). It contains multiple copies of three enzymatic components: pyruvate dehydrogenase (E1), dihydrolipoamide acetyltransferase (E2) and lipoamide dehydrogenase (E3). This Arabidopsis thaliana (Mouse-ear cress) protein is Pyruvate dehydrogenase E1 component subunit alpha-3, chloroplastic (PDH-E1 ALPHA).